The chain runs to 439 residues: 23S rRNA (uracil(1939)-C(5))-methyltransferase RlmD (439 aa).

The TRAM domain maps to 5-63 (RKLEHKTYKLNIESFSHEGRGIAHFEDKIIFVSDALPGELVIANRTFSCAKFEEADAKE). [4Fe-4S] cluster contacts are provided by Cys76, Cys82, Cys85, and Cys164. 6 residues coordinate S-adenosyl-L-methionine: Gln271, Phe300, Asn305, Glu321, Asp348, and Asp370. Cys396 (nucleophile) is an active-site residue.

The protein belongs to the class I-like SAM-binding methyltransferase superfamily. RNA M5U methyltransferase family. RlmD subfamily.

It catalyses the reaction uridine(1939) in 23S rRNA + S-adenosyl-L-methionine = 5-methyluridine(1939) in 23S rRNA + S-adenosyl-L-homocysteine + H(+). Catalyzes the formation of 5-methyl-uridine at position 1939 (m5U1939) in 23S rRNA. This chain is 23S rRNA (uracil(1939)-C(5))-methyltransferase RlmD, found in Vesicomyosocius okutanii subsp. Calyptogena okutanii (strain HA).